The chain runs to 693 residues: UvrABC system protein B (693 aa).

In terms of domain architecture, Helicase ATP-binding spans 35–188; it reads ERIKNGEKDV…DDLLRKFVSM (154 aa). 48-55 contributes to the ATP binding site; that stretch reads GATGTGKS. Positions 101-124 match the Beta-hairpin motif; that stretch reads YYDYYQPEAYVAQTDTFIEKDSSV. One can recognise a Helicase C-terminal domain in the interval 438 to 604; that stretch reads QIDDLLGEIK…PLRKKIADIT (167 aa). Positions 648–683 constitute a UVR domain; sequence VGLIEQLTEQMHAAAGELQFELAARLRDEVGELKKE.

The protein belongs to the UvrB family. Forms a heterotetramer with UvrA during the search for lesions. Interacts with UvrC in an incision complex.

It localises to the cytoplasm. In terms of biological role, the UvrABC repair system catalyzes the recognition and processing of DNA lesions. A damage recognition complex composed of 2 UvrA and 2 UvrB subunits scans DNA for abnormalities. Upon binding of the UvrA(2)B(2) complex to a putative damaged site, the DNA wraps around one UvrB monomer. DNA wrap is dependent on ATP binding by UvrB and probably causes local melting of the DNA helix, facilitating insertion of UvrB beta-hairpin between the DNA strands. Then UvrB probes one DNA strand for the presence of a lesion. If a lesion is found the UvrA subunits dissociate and the UvrB-DNA preincision complex is formed. This complex is subsequently bound by UvrC and the second UvrB is released. If no lesion is found, the DNA wraps around the other UvrB subunit that will check the other stand for damage. In Arthrobacter sp. (strain FB24), this protein is UvrABC system protein B.